We begin with the raw amino-acid sequence, 176 residues long: Small ribosomal subunit protein uS8c (176 aa).

The protein belongs to the universal ribosomal protein uS8 family. Part of the 30S ribosomal subunit.

Its subcellular location is the plastid. It is found in the chloroplast. One of the primary rRNA binding proteins, it binds directly to 16S rRNA central domain where it helps coordinate assembly of the platform of the 30S subunit. The chain is Small ribosomal subunit protein uS8c (rps8) from Stigeoclonium helveticum (Green alga).